The primary structure comprises 394 residues: Elongation factor Tu (394 aa).

The region spanning 10 to 204 (KPHINIGTIG…AVDDNIPTPE (195 aa)) is the tr-type G domain. Positions 19–26 (GHVDHGKT) are G1. 19-26 (GHVDHGKT) serves as a coordination point for GTP. A Mg(2+)-binding site is contributed by threonine 26. The tract at residues 60–64 (GITIN) is G2. Residues 81–84 (DCPG) are G3. GTP is bound by residues 81–85 (DCPGH) and 136–139 (NKID). The G4 stretch occupies residues 136–139 (NKID). The interval 174-176 (SAL) is G5.

Belongs to the TRAFAC class translation factor GTPase superfamily. Classic translation factor GTPase family. EF-Tu/EF-1A subfamily. Monomer.

Its subcellular location is the cytoplasm. It carries out the reaction GTP + H2O = GDP + phosphate + H(+). Its function is as follows. GTP hydrolase that promotes the GTP-dependent binding of aminoacyl-tRNA to the A-site of ribosomes during protein biosynthesis. The polypeptide is Elongation factor Tu (Chlamydia abortus (strain DSM 27085 / S26/3) (Chlamydophila abortus)).